The chain runs to 474 residues: MVETTNKGYVCQIIGPVLDIEFPGGKLPPIYSAIKIETADGIGNIVEVQQLLGDNKVRAVSMRSTDGLKRGVEAVDLGAPITVPVGVPTLGRIFNVIGEPVDEQGDVVVDQTLPIHRDAPAFTELETKPSIFETGIKVVDLLAPYRRGGKIGLFGGAGVGKTVLIMELINNIAKAHGGVSVFGGVGERTREGNDLYEEMKESGVINSSNFAESKVALVYGQMNEPPGARMRVGLTALTMAEYFRDVNKQDVLLFIDNIFRFTQAGSEVSALLGRMPSAVGYQPTLATEMGALQERITSTTQGSITSIQAVYVPADDLTDPAPATTFAHLDATTVLSRNLAAKGIYPAVDPLDSTSTMLQPGIVSEVHYETAETVKETLQRYKELQDIIAILGIDELSEEDRLVVARARKVERFLSQPFFVAEIFTGSPGKYVSLEETIKGFTMILNGELDDLPEQSFYLVGNIDEAIAKAETLK.

Residue 155–162 participates in ATP binding; sequence GGAGVGKT.

This sequence belongs to the ATPase alpha/beta chains family. As to quaternary structure, F-type ATPases have 2 components, CF(1) - the catalytic core - and CF(0) - the membrane proton channel. CF(1) has five subunits: alpha(3), beta(3), gamma(1), delta(1), epsilon(1). CF(0) has four main subunits: a(1), b(1), b'(1) and c(9-12).

It localises to the plastid. Its subcellular location is the chloroplast thylakoid membrane. It catalyses the reaction ATP + H2O + 4 H(+)(in) = ADP + phosphate + 5 H(+)(out). Produces ATP from ADP in the presence of a proton gradient across the membrane. The catalytic sites are hosted primarily by the beta subunits. This is ATP synthase subunit beta, chloroplastic from Thalassiosira pseudonana (Marine diatom).